Consider the following 107-residue polypeptide: Large ribosomal subunit protein uL24 (107 aa).

Belongs to the universal ribosomal protein uL24 family. As to quaternary structure, part of the 50S ribosomal subunit.

Functionally, one of two assembly initiator proteins, it binds directly to the 5'-end of the 23S rRNA, where it nucleates assembly of the 50S subunit. In terms of biological role, one of the proteins that surrounds the polypeptide exit tunnel on the outside of the subunit. This Thermoanaerobacter pseudethanolicus (strain ATCC 33223 / 39E) (Clostridium thermohydrosulfuricum) protein is Large ribosomal subunit protein uL24.